The chain runs to 174 residues: MNHDKSPIILIGFMGTGKSTIGKYVADEQNLSFIDIDSYIEEKYKLTIPEIFSKHGEQYFRNLEFTCLQECINTADIIATGGGIIESEEVFNFLKNQKNIIWLDCNIDIIYSRINDDPHRPNANNKTIKQLNDLYCSRILRYNEIAFKKFDSHLLSISEIYYELLNLIKASDQY.

15–20 provides a ligand contact to ATP; it reads GTGKST. Mg(2+) is bound at residue serine 19. 3 residues coordinate substrate: aspartate 37, arginine 61, and glycine 82. Arginine 120 is a binding site for ATP. Arginine 138 is a binding site for substrate.

This sequence belongs to the shikimate kinase family. In terms of assembly, monomer. Mg(2+) serves as cofactor.

The protein resides in the cytoplasm. The enzyme catalyses shikimate + ATP = 3-phosphoshikimate + ADP + H(+). It functions in the pathway metabolic intermediate biosynthesis; chorismate biosynthesis; chorismate from D-erythrose 4-phosphate and phosphoenolpyruvate: step 5/7. Functionally, catalyzes the specific phosphorylation of the 3-hydroxyl group of shikimic acid using ATP as a cosubstrate. The sequence is that of Shikimate kinase from Staphylococcus aureus (strain MRSA252).